Here is a 350-residue protein sequence, read N- to C-terminus: Protein-glutamate methylesterase/protein-glutamine glutaminase 1 (350 aa).

Residues 6–123 (RVLVVDDSAL…GRSVENYAEE (118 aa)) form the Response regulatory domain. D57 carries the post-translational modification 4-aspartylphosphate. The CheB-type methylesterase domain maps to 159–350 (LGASGKIIFV…ARRVLGAVSA (192 aa)). Active-site residues include S171, H197, and D293.

This sequence belongs to the CheB family. Phosphorylated by CheA. Phosphorylation of the N-terminal regulatory domain activates the methylesterase activity.

The protein localises to the cytoplasm. The catalysed reaction is [protein]-L-glutamate 5-O-methyl ester + H2O = L-glutamyl-[protein] + methanol + H(+). It carries out the reaction L-glutaminyl-[protein] + H2O = L-glutamyl-[protein] + NH4(+). Functionally, involved in chemotaxis. Part of a chemotaxis signal transduction system that modulates chemotaxis in response to various stimuli. Catalyzes the demethylation of specific methylglutamate residues introduced into the chemoreceptors (methyl-accepting chemotaxis proteins or MCP) by CheR. Also mediates the irreversible deamidation of specific glutamine residues to glutamic acid. The chain is Protein-glutamate methylesterase/protein-glutamine glutaminase 1 from Dechloromonas aromatica (strain RCB).